A 207-amino-acid polypeptide reads, in one-letter code: Outer-membrane lipoprotein carrier protein (207 aa).

The first 22 residues, methionine 1–alanine 22, serve as a signal peptide directing secretion.

This sequence belongs to the LolA family. In terms of assembly, monomer.

It localises to the periplasm. Its function is as follows. Participates in the translocation of lipoproteins from the inner membrane to the outer membrane. Only forms a complex with a lipoprotein if the residue after the N-terminal Cys is not an aspartate (The Asp acts as a targeting signal to indicate that the lipoprotein should stay in the inner membrane). This is Outer-membrane lipoprotein carrier protein from Nitrosospira multiformis (strain ATCC 25196 / NCIMB 11849 / C 71).